Here is a 122-residue protein sequence, read N- to C-terminus: Large ribosomal subunit protein uL14 (122 aa).

The protein belongs to the universal ribosomal protein uL14 family. As to quaternary structure, part of the 50S ribosomal subunit. Forms a cluster with proteins L3 and L19. In the 70S ribosome, L14 and L19 interact and together make contacts with the 16S rRNA in bridges B5 and B8.

In terms of biological role, binds to 23S rRNA. Forms part of two intersubunit bridges in the 70S ribosome. The chain is Large ribosomal subunit protein uL14 from Hahella chejuensis (strain KCTC 2396).